We begin with the raw amino-acid sequence, 319 residues long: COP9 signalosome complex subunit 6 (319 aa).

One can recognise an MPN domain in the interval 33-166 (VALHPLVILN…VSVYESVIDI (134 aa)).

This sequence belongs to the peptidase M67A family. CSN6 subfamily. Component of the CSN complex, probably composed of cops1, cops2, cops3, cops4, cops5, cops6, cops7, cops8 and cops9.

It localises to the cytoplasm. The protein localises to the nucleus. Functionally, component of the COP9 signalosome complex (CSN), a complex involved in various cellular and developmental processes. The CSN complex is an essential regulator of the ubiquitin (Ubl) conjugation pathway by mediating the deneddylation of the cullin subunits of E3 ligase complexes, leading to modify the Ubl ligase activity. This Xenopus tropicalis (Western clawed frog) protein is COP9 signalosome complex subunit 6 (cops6).